Consider the following 557-residue polypeptide: MRSDMIKKGFDKAPHRSLLKATGLKDEDFHKPFVAICNSFIEIIPGHKHLNEFGRLVKEAVRAAGMVPFEFNTIGVDDGIAMGHIGMRYSLPSREIIADSVETVVNAHWFDGMICIPNCDKITPGMMMAAMRINIPTVFVSGGPMAAGKTSKGEVVDLSSVFEGVGAYQSGKISEEELKDIEDHGCPSCGSCSGMFTANSMNCLCEVLGLALPGNGSILATDSRREQLIQRAAESLKILMERDIKPRDIVTEEAIDDAFALDMAMGGSTNTVLHTLAIAQEAGLDYDMNRIDAVSRKVPHLCKVSPASNWHMEDIDRAGGMSAILKELSRKEGVLHFDRITVTGKTLRENIADAEIQDKEVIHSLENPHSQEGGLRILKGNLAKDGAVIKSGATEVKRFEGPCVIFNSQDEALAGIMLGKVKKGDVVVIRYEGPRGGPGMPEMLAPTSAIAGMGLGADVALLTDGRFSGASRGISVGHISPEAAAGGEIALLQQGDIVCIDVEERLLEVKVSDEELAKRRKEWKRPEPKVKTGWLGRYAQMVTSANTGAVLKMQNFD.

Asp-78 is a binding site for Mg(2+). [2Fe-2S] cluster is bound at residue Cys-119. Mg(2+) contacts are provided by Asp-120 and Lys-121. At Lys-121 the chain carries N6-carboxylysine. [2Fe-2S] cluster is bound at residue Cys-192. Glu-442 provides a ligand contact to Mg(2+). The active-site Proton acceptor is Ser-468.

This sequence belongs to the IlvD/Edd family. In terms of assembly, homodimer. It depends on [2Fe-2S] cluster as a cofactor. The cofactor is Mg(2+).

The enzyme catalyses (2R)-2,3-dihydroxy-3-methylbutanoate = 3-methyl-2-oxobutanoate + H2O. It catalyses the reaction (2R,3R)-2,3-dihydroxy-3-methylpentanoate = (S)-3-methyl-2-oxopentanoate + H2O. Its pathway is amino-acid biosynthesis; L-isoleucine biosynthesis; L-isoleucine from 2-oxobutanoate: step 3/4. It participates in amino-acid biosynthesis; L-valine biosynthesis; L-valine from pyruvate: step 3/4. Functions in the biosynthesis of branched-chain amino acids. Catalyzes the dehydration of (2R,3R)-2,3-dihydroxy-3-methylpentanoate (2,3-dihydroxy-3-methylvalerate) into 2-oxo-3-methylpentanoate (2-oxo-3-methylvalerate) and of (2R)-2,3-dihydroxy-3-methylbutanoate (2,3-dihydroxyisovalerate) into 2-oxo-3-methylbutanoate (2-oxoisovalerate), the penultimate precursor to L-isoleucine and L-valine, respectively. In Bacillus cytotoxicus (strain DSM 22905 / CIP 110041 / 391-98 / NVH 391-98), this protein is Dihydroxy-acid dehydratase.